The chain runs to 350 residues: D-alanine--D-alanine ligase (350 aa).

Residues Asn133 to Gly334 form the ATP-grasp domain. Phe161–Gln216 is an ATP binding site. Residues Asp288, Glu300, and Asn302 each contribute to the Mg(2+) site.

Belongs to the D-alanine--D-alanine ligase family. Mg(2+) is required as a cofactor. The cofactor is Mn(2+).

It is found in the cytoplasm. It carries out the reaction 2 D-alanine + ATP = D-alanyl-D-alanine + ADP + phosphate + H(+). It participates in cell wall biogenesis; peptidoglycan biosynthesis. Functionally, cell wall formation. The protein is D-alanine--D-alanine ligase of Finegoldia magna (strain ATCC 29328 / DSM 20472 / WAL 2508) (Peptostreptococcus magnus).